The sequence spans 269 residues: Probable ribosomal RNA small subunit methyltransferase A (269 aa).

His-23, Leu-25, Gly-50, Glu-71, Asp-95, and Asn-110 together coordinate S-adenosyl-L-methionine.

Belongs to the class I-like SAM-binding methyltransferase superfamily. rRNA adenine N(6)-methyltransferase family. RsmA subfamily.

Its subcellular location is the cytoplasm. Specifically dimethylates two adjacent adenosines in the loop of a conserved hairpin near the 3'-end of 16S rRNA in the 30S particle. May play a critical role in biogenesis of 30S subunits. This is Probable ribosomal RNA small subunit methyltransferase A from Pyrococcus abyssi (strain GE5 / Orsay).